We begin with the raw amino-acid sequence, 359 residues long: Peptide chain release factor 1 (359 aa).

An N5-methylglutamine modification is found at Q233.

The protein belongs to the prokaryotic/mitochondrial release factor family. Post-translationally, methylated by PrmC. Methylation increases the termination efficiency of RF1.

It is found in the cytoplasm. Its function is as follows. Peptide chain release factor 1 directs the termination of translation in response to the peptide chain termination codons UAG and UAA. This Cytophaga hutchinsonii (strain ATCC 33406 / DSM 1761 / CIP 103989 / NBRC 15051 / NCIMB 9469 / D465) protein is Peptide chain release factor 1.